Here is a 197-residue protein sequence, read N- to C-terminus: ATP-dependent Clp protease proteolytic subunit 1 (197 aa).

The active-site Nucleophile is the Ser99. Residue His124 is part of the active site.

The protein belongs to the peptidase S14 family. In terms of assembly, fourteen ClpP subunits assemble into 2 heptameric rings which stack back to back to give a disk-like structure with a central cavity, resembling the structure of eukaryotic proteasomes.

The protein resides in the cytoplasm. It carries out the reaction Hydrolysis of proteins to small peptides in the presence of ATP and magnesium. alpha-casein is the usual test substrate. In the absence of ATP, only oligopeptides shorter than five residues are hydrolyzed (such as succinyl-Leu-Tyr-|-NHMec, and Leu-Tyr-Leu-|-Tyr-Trp, in which cleavage of the -Tyr-|-Leu- and -Tyr-|-Trp bonds also occurs).. Cleaves peptides in various proteins in a process that requires ATP hydrolysis. Has a chymotrypsin-like activity. Plays a major role in the degradation of misfolded proteins. The polypeptide is ATP-dependent Clp protease proteolytic subunit 1 (Treponema denticola (strain ATCC 35405 / DSM 14222 / CIP 103919 / JCM 8153 / KCTC 15104)).